Consider the following 125-residue polypeptide: uncharacterized protein (125 aa).

The helical transmembrane segment at 7–29 (NCMFLYVYTDVCVRLCASIFYIM) threads the bilayer.

The protein resides in the membrane. This is an uncharacterized protein from Saccharomyces cerevisiae (strain ATCC 204508 / S288c) (Baker's yeast).